Consider the following 234-residue polypeptide: Hydrolase in agr operon (234 aa).

In terms of domain architecture, CN hydrolase spans 1–212; that stretch reads ILYNKDTDVV…EKELTVTIDI (212 aa). The active-site Proton acceptor is Glu-14. Catalysis depends on Lys-83, which acts as the Proton donor. Cys-119 acts as the Nucleophile in catalysis.

It belongs to the carbon-nitrogen hydrolase superfamily. NIT1/NIT2 family.

The sequence is that of Hydrolase in agr operon from Staphylococcus lugdunensis.